We begin with the raw amino-acid sequence, 249 residues long: Ribonuclease 3 (249 aa).

The 130-residue stretch at 20–149 (FKKFQERISV…FIGALYLDQG (130 aa)) folds into the RNase III domain. Residue E62 participates in Mg(2+) binding. Residue D66 is part of the active site. D135 and E138 together coordinate Mg(2+). The active site involves E138. The DRBM domain maps to 175–244 (DFKSQLQEFV…AQEALAKLQK (70 aa)). The disordered stretch occupies residues 225–249 (RSKKEAEQHAAQEALAKLQKHHMKQ).

It belongs to the ribonuclease III family. As to quaternary structure, homodimer. It depends on Mg(2+) as a cofactor.

It localises to the cytoplasm. It catalyses the reaction Endonucleolytic cleavage to 5'-phosphomonoester.. Digests double-stranded RNA. Involved in the processing of primary rRNA transcript to yield the immediate precursors to the large and small rRNAs (23S and 16S). Processes some mRNAs, and tRNAs when they are encoded in the rRNA operon. Processes pre-crRNA and tracrRNA of type II CRISPR loci if present in the organism. This is Ribonuclease 3 from Bacillus licheniformis (strain ATCC 14580 / DSM 13 / JCM 2505 / CCUG 7422 / NBRC 12200 / NCIMB 9375 / NCTC 10341 / NRRL NRS-1264 / Gibson 46).